A 198-amino-acid chain; its full sequence is UPF0215 protein NEQ431 (198 aa).

The tract at residues 179–198 (TKGDSSKPRAGGDSNPGPAG) is disordered.

The protein belongs to the UPF0215 family.

The protein is UPF0215 protein NEQ431 of Nanoarchaeum equitans (strain Kin4-M).